The chain runs to 224 residues: UPF0173 metal-dependent hydrolase TTHA1283 (224 aa).

It belongs to the UPF0173 family.

The chain is UPF0173 metal-dependent hydrolase TTHA1283 from Thermus thermophilus (strain ATCC 27634 / DSM 579 / HB8).